The following is a 264-amino-acid chain: Thymidylate synthase (264 aa).

Residue Arg21 coordinates dUMP. A (6R)-5,10-methylene-5,6,7,8-tetrahydrofolate-binding site is contributed by His51. A dUMP-binding site is contributed by Arg126–Arg127. The active-site Nucleophile is the Cys146. DUMP is bound by residues Arg166 to Asp169, Asn177, and His207 to Tyr209. Residue Asp169 coordinates (6R)-5,10-methylene-5,6,7,8-tetrahydrofolate. Ala263 contributes to the (6R)-5,10-methylene-5,6,7,8-tetrahydrofolate binding site.

The protein belongs to the thymidylate synthase family. Bacterial-type ThyA subfamily. In terms of assembly, homodimer.

It localises to the cytoplasm. The catalysed reaction is dUMP + (6R)-5,10-methylene-5,6,7,8-tetrahydrofolate = 7,8-dihydrofolate + dTMP. It participates in pyrimidine metabolism; dTTP biosynthesis. In terms of biological role, catalyzes the reductive methylation of 2'-deoxyuridine-5'-monophosphate (dUMP) to 2'-deoxythymidine-5'-monophosphate (dTMP) while utilizing 5,10-methylenetetrahydrofolate (mTHF) as the methyl donor and reductant in the reaction, yielding dihydrofolate (DHF) as a by-product. This enzymatic reaction provides an intracellular de novo source of dTMP, an essential precursor for DNA biosynthesis. The protein is Thymidylate synthase of Rhizobium johnstonii (strain DSM 114642 / LMG 32736 / 3841) (Rhizobium leguminosarum bv. viciae).